A 407-amino-acid polypeptide reads, in one-letter code: Na(+)-translocating NADH-quinone reductase subunit F (407 aa).

Residues 3–23 form a helical membrane-spanning segment; sequence ITLGIAMFTVIVLALAVIILF. The 95-residue stretch at 32–126 folds into the 2Fe-2S ferredoxin-type domain; the sequence is GDITIEINDD…SMKVELPEEV (95 aa). 4 residues coordinate [2Fe-2S] cluster: Cys69, Cys75, Cys78, and Cys110. The 141-residue stretch at 129–269 folds into the FAD-binding FR-type domain; the sequence is VKKWECTVIS…SGPFGEFFAK (141 aa). The segment at 272–389 is catalytic; sequence DAEMVFVGGG…PIMNASVIKM (118 aa).

This sequence belongs to the NqrF family. Composed of six subunits; NqrA, NqrB, NqrC, NqrD, NqrE and NqrF. It depends on [2Fe-2S] cluster as a cofactor. The cofactor is FAD.

It is found in the cell inner membrane. The enzyme catalyses a ubiquinone + n Na(+)(in) + NADH + H(+) = a ubiquinol + n Na(+)(out) + NAD(+). In terms of biological role, NQR complex catalyzes the reduction of ubiquinone-1 to ubiquinol by two successive reactions, coupled with the transport of Na(+) ions from the cytoplasm to the periplasm. The first step is catalyzed by NqrF, which accepts electrons from NADH and reduces ubiquinone-1 to ubisemiquinone by a one-electron transfer pathway. The sequence is that of Na(+)-translocating NADH-quinone reductase subunit F from Pasteurella multocida (strain Pm70).